A 1333-amino-acid polypeptide reads, in one-letter code: DNA-directed RNA polymerase subunit beta' (1333 aa).

The Zn(2+) site is built by C60, C62, C75, and C78. Residues D535, D537, and D539 each coordinate Mg(2+). Zn(2+) contacts are provided by C901, C983, C990, and C993.

This sequence belongs to the RNA polymerase beta' chain family. In terms of assembly, the RNAP catalytic core consists of 2 alpha, 1 beta, 1 beta' and 1 omega subunit. When a sigma factor is associated with the core the holoenzyme is formed, which can initiate transcription. It depends on Mg(2+) as a cofactor. The cofactor is Zn(2+).

It catalyses the reaction RNA(n) + a ribonucleoside 5'-triphosphate = RNA(n+1) + diphosphate. Functionally, DNA-dependent RNA polymerase catalyzes the transcription of DNA into RNA using the four ribonucleoside triphosphates as substrates. This is DNA-directed RNA polymerase subunit beta' from Corynebacterium efficiens (strain DSM 44549 / YS-314 / AJ 12310 / JCM 11189 / NBRC 100395).